The following is a 168-amino-acid chain: Endoribonuclease YbeY (168 aa).

Zn(2+)-binding residues include H128, H132, and H138.

It belongs to the endoribonuclease YbeY family. Zn(2+) serves as cofactor.

Its subcellular location is the cytoplasm. Single strand-specific metallo-endoribonuclease involved in late-stage 70S ribosome quality control and in maturation of the 3' terminus of the 16S rRNA. This chain is Endoribonuclease YbeY, found in Sphingopyxis alaskensis (strain DSM 13593 / LMG 18877 / RB2256) (Sphingomonas alaskensis).